A 332-amino-acid chain; its full sequence is 4-hydroxy-3-methylbut-2-enyl diphosphate reductase (332 aa).

[4Fe-4S] cluster is bound at residue C13. The (2E)-4-hydroxy-3-methylbut-2-enyl diphosphate site is built by H41 and H75. Dimethylallyl diphosphate contacts are provided by H41 and H75. 2 residues coordinate isopentenyl diphosphate: H41 and H75. [4Fe-4S] cluster is bound at residue C97. H125 serves as a coordination point for (2E)-4-hydroxy-3-methylbut-2-enyl diphosphate. H125 lines the dimethylallyl diphosphate pocket. H125 lines the isopentenyl diphosphate pocket. E127 acts as the Proton donor in catalysis. T168 provides a ligand contact to (2E)-4-hydroxy-3-methylbut-2-enyl diphosphate. A [4Fe-4S] cluster-binding site is contributed by C229. Positions 257, 258, 259, and 306 each coordinate (2E)-4-hydroxy-3-methylbut-2-enyl diphosphate. S257, S258, N259, and S306 together coordinate dimethylallyl diphosphate. The isopentenyl diphosphate site is built by S257, S258, N259, and S306.

It belongs to the IspH family. [4Fe-4S] cluster serves as cofactor.

The catalysed reaction is isopentenyl diphosphate + 2 oxidized [2Fe-2S]-[ferredoxin] + H2O = (2E)-4-hydroxy-3-methylbut-2-enyl diphosphate + 2 reduced [2Fe-2S]-[ferredoxin] + 2 H(+). The enzyme catalyses dimethylallyl diphosphate + 2 oxidized [2Fe-2S]-[ferredoxin] + H2O = (2E)-4-hydroxy-3-methylbut-2-enyl diphosphate + 2 reduced [2Fe-2S]-[ferredoxin] + 2 H(+). Its pathway is isoprenoid biosynthesis; dimethylallyl diphosphate biosynthesis; dimethylallyl diphosphate from (2E)-4-hydroxy-3-methylbutenyl diphosphate: step 1/1. It participates in isoprenoid biosynthesis; isopentenyl diphosphate biosynthesis via DXP pathway; isopentenyl diphosphate from 1-deoxy-D-xylulose 5-phosphate: step 6/6. Functionally, catalyzes the conversion of 1-hydroxy-2-methyl-2-(E)-butenyl 4-diphosphate (HMBPP) into a mixture of isopentenyl diphosphate (IPP) and dimethylallyl diphosphate (DMAPP). Acts in the terminal step of the DOXP/MEP pathway for isoprenoid precursor biosynthesis. The chain is 4-hydroxy-3-methylbut-2-enyl diphosphate reductase from Chlorobaculum parvum (strain DSM 263 / NCIMB 8327) (Chlorobium vibrioforme subsp. thiosulfatophilum).